Reading from the N-terminus, the 183-residue chain is 2-hydroxy-1,4-benzoquinone reductase (183 aa).

Residues 11 to 18 (SLRRDSFN), 77 to 80 (EYNR), and serine 113 each bind FMN.

This sequence belongs to the SsuE family. Homotetramer. It depends on FMN as a cofactor.

It carries out the reaction 2-hydroxy-1,4-benzoquinone + NADH + 2 H(+) = benzene-1,2,4-triol + NAD(+). Its function is as follows. Involved in the metabolism of 4-aminophenol. Catalyzes the reduction of the auto-oxidation product 2-hydroxy-1,4-benzoquinone back to hydroxyquinol. Has a broad substrate specificity toward benzoquinones, converting them to the corresponding 1,4-benzenediols. This is 2-hydroxy-1,4-benzoquinone reductase from Burkholderia sp.